The primary structure comprises 158 residues: Flagellar assembly factor FliW (158 aa).

The protein belongs to the FliW family. In terms of assembly, interacts with translational regulator CsrA and flagellin(s).

It localises to the cytoplasm. Its function is as follows. Acts as an anti-CsrA protein, binds CsrA and prevents it from repressing translation of its target genes, one of which is flagellin. Binds to flagellin and participates in the assembly of the flagellum. The chain is Flagellar assembly factor FliW from Moorella thermoacetica (strain ATCC 39073 / JCM 9320).